An 89-amino-acid polypeptide reads, in one-letter code: U1-hexatoxin-Iw1e (89 aa).

An N-terminal signal peptide occupies residues 1-18 (MLKFVVLIFVVIMASTFA). Intrachain disulfides connect Cys-21/Cys-32, Cys-26/Cys-40, Cys-31/Cys-66, Cys-50/Cys-74, and Cys-68/Cys-81. A propeptide spanning residues 87–89 (RSE) is cleaved from the precursor.

It belongs to the MIT-like AcTx family. Expressed by the venom gland.

The protein resides in the secreted. This is U1-hexatoxin-Iw1e from Illawarra wisharti (Illawarra funnel-web spider).